Consider the following 313-residue polypeptide: MTARRPTRFAKGELNVYRAPRDVTDVTRALRSTGRRVVLVPTMGALHEGHLTLIRAAKRVQGAVVVVSIFVNPLQFGAGEDLDAYPRTLDDDLAALRAEGVEIAFTPTVGDMYPYGTRTSVHPGPLGDDLEGASRPGHFAGVLTVVCKLLHIVRPDRAFFGEKDYQQLVLIRQMVTDLNIDTRIVGVPTVREADGLALSSRNRYLDEVEREQAGALSAALLAGMYAASNGAAATLDAARAVLDEVPAIEVDYLQVRDPMLGPVPHEGAARLLVAARLGQTRLLDNIAVDIGASDGIDGHPRVGSPDHQLPWRN.

43–50 contributes to the ATP binding site; the sequence is MGALHEGH. His-50 acts as the Proton donor in catalysis. Position 75 (Gln-75) interacts with (R)-pantoate. Residue Gln-75 participates in beta-alanine binding. An ATP-binding site is contributed by 161 to 164; that stretch reads GEKD. (R)-pantoate is bound at residue Gln-167. ATP is bound by residues Val-190 and 198–201; that span reads LSSR.

Belongs to the pantothenate synthetase family. As to quaternary structure, homodimer.

The protein localises to the cytoplasm. The catalysed reaction is (R)-pantoate + beta-alanine + ATP = (R)-pantothenate + AMP + diphosphate + H(+). Its pathway is cofactor biosynthesis; (R)-pantothenate biosynthesis; (R)-pantothenate from (R)-pantoate and beta-alanine: step 1/1. In terms of biological role, catalyzes the condensation of pantoate with beta-alanine in an ATP-dependent reaction via a pantoyl-adenylate intermediate. In Mycobacterium sp. (strain JLS), this protein is Pantothenate synthetase.